The sequence spans 1349 residues: Elongator complex protein 1 (1349 aa).

Residues serine 529, serine 539, serine 551, serine 636, and serine 828 each carry the phosphoserine modification. The mediates dimerization stretch occupies residues 919 to 1349 (QDVNVVYKSA…DFPKSHIVDF (431 aa)). 2 positions are modified to phosphoserine; by HRR25: serine 1198 and serine 1202. 2 positions are modified to phosphoserine: serine 1205 and serine 1209. Residues 1214–1228 (YTGKTGGTAKTGASR) are compositionally biased toward low complexity. The disordered stretch occupies residues 1214 to 1245 (YTGKTGGTAKTGASRRTAKNKRREERKRARGK). The segment at 1228–1246 (RRTAKNKRREERKRARGKK) is required for binding to tRNA.

The protein belongs to the ELP1/IKA1 family. Homodimer; dimerization promotes ELP1/IKI3 stability and elongator complex formation. Component of the elongator complex which consists of ELP1/IKI3, ELP2, ELP3, ELP4, ELP5/IKI1 and ELP6. The elongator complex is composed of two copies of the Elp123 subcomplex (composed of ELP1/IKI3, ELP2 and ELP3) and two copies of the Elp456 subcomplex (composed of ELP4, ELP5/IKI1 and ELP6). The Elp123 subcomplex forms a two-lobed scaffold, which binds the Elp456 subcomplex asymmetrically. In the complex, ELP1/IKI3 interacts with ELP2. In each lobe, ELP2 is tightly sandwiched between ELP1/IKI3 and ELP3. The Elp123 subcomplex binds tRNA through ELP1/IKI3 and ELP3 and can bind 2 tRNAs simultaneously. tRNA-binding induces conformational rearrangements which precisely position the targeted anticodon base in the active site. The Elp456 subcomplex binds tRNA and has ATPase activity. ELP1/IKI3 interacts with HRR25 and KTI12. Interacts with KTI11/DPH3. Post-translationally, phosphorylation promotes the tRNA modification function of the elongator complex.

It localises to the cytoplasm. The protein localises to the nucleus. It participates in tRNA modification; 5-methoxycarbonylmethyl-2-thiouridine-tRNA biosynthesis. In terms of biological role, component of the elongator complex which is required for multiple tRNA modifications, including mcm5U (5-methoxycarbonylmethyl uridine), mcm5s2U (5-methoxycarbonylmethyl-2-thiouridine), and ncm5U (5-carbamoylmethyl uridine). The elongator complex catalyzes formation of carboxymethyluridine in the wobble base at position 34 in tRNAs. Functions as a gamma-toxin target (TOT); disruption of the complex confers resistance to Kluyveromyces lactis toxin zymocin (pGKL1 killer toxin). May also be involved in sensitivity to Pichia inositovora toxin. ELP1/IKI3 binds to tRNA, mediating interaction of the elongator complex with tRNA. Independently, may be involved in polarized exocytosis. The sequence is that of Elongator complex protein 1 (IKI3) from Saccharomyces cerevisiae (strain ATCC 204508 / S288c) (Baker's yeast).